The chain runs to 519 residues: Xylose import ATP-binding protein XylG (519 aa).

ABC transporter domains lie at 6 to 245 (MTMR…VGRE) and 262 to 507 (FEAR…IRPV). Residue 38–45 (GENGAGKS) participates in ATP binding.

Belongs to the ABC transporter superfamily. Xylose importer (TC 3.A.1.2.4) family. In terms of assembly, the complex is composed of two ATP-binding proteins (XylG), two transmembrane proteins (XylH) and a solute-binding protein (XylF).

The protein localises to the cell inner membrane. The enzyme catalyses D-xylose(out) + ATP + H2O = D-xylose(in) + ADP + phosphate + H(+). Its function is as follows. Part of the ABC transporter complex XylFGH involved in xylose import. Responsible for energy coupling to the transport system. The chain is Xylose import ATP-binding protein XylG from Paraburkholderia xenovorans (strain LB400).